Consider the following 206-residue polypeptide: Protein GET1 (206 aa).

Topologically, residues methionine 1–leucine 4 are lumenal. A helical transmembrane segment spans residues leucine 5–alanine 24. Topologically, residues threonine 25 to arginine 110 are cytoplasmic. Residues alanine 75 to serine 100 are a coiled coil. A helical transmembrane segment spans residues tryptophan 111 to phenylalanine 131. The Lumenal portion of the chain corresponds to threonine 132–threonine 155. A helical membrane pass occupies residues valine 156–valine 172. Residues glycine 173 to glutamine 206 lie on the Cytoplasmic side of the membrane.

The protein belongs to the WRB/GET1 family. Interacts with GET3.

Its subcellular location is the endoplasmic reticulum membrane. In terms of biological role, required for the post-translational delivery of tail-anchored (TA) proteins to the endoplasmic reticulum. Acts as a membrane receptor for soluble GET3, which recognizes and selectively binds the transmembrane domain of TA proteins in the cytosol. This Ajellomyces capsulatus (strain NAm1 / WU24) (Darling's disease fungus) protein is Protein GET1.